We begin with the raw amino-acid sequence, 1406 residues long: DNA-directed RNA polymerase subunit beta' (1406 aa).

Positions 70, 72, 85, and 88 each coordinate Zn(2+). Residues Asp-460, Asp-462, and Asp-464 each coordinate Mg(2+). 4 residues coordinate Zn(2+): Cys-814, Cys-888, Cys-895, and Cys-898.

The protein belongs to the RNA polymerase beta' chain family. In terms of assembly, the RNAP catalytic core consists of 2 alpha, 1 beta, 1 beta' and 1 omega subunit. When a sigma factor is associated with the core the holoenzyme is formed, which can initiate transcription. It depends on Mg(2+) as a cofactor. Zn(2+) serves as cofactor.

The enzyme catalyses RNA(n) + a ribonucleoside 5'-triphosphate = RNA(n+1) + diphosphate. In terms of biological role, DNA-dependent RNA polymerase catalyzes the transcription of DNA into RNA using the four ribonucleoside triphosphates as substrates. The protein is DNA-directed RNA polymerase subunit beta' of Yersinia pseudotuberculosis serotype O:1b (strain IP 31758).